The primary structure comprises 148 residues: uncharacterized protein (148 aa).

Residues 7–148 enclose the N-acetyltransferase domain; the sequence is LEINYKTDEL…HDVLLWKPIR (142 aa).

This is an uncharacterized protein from Staphylococcus aureus (strain Mu50 / ATCC 700699).